The chain runs to 771 residues: Probable exo-1,4-beta-xylosidase bxlB (771 aa).

The N-terminal stretch at 1–25 is a signal peptide; the sequence is MVGLTPQHYGNAIALMTYLASTALA. The N-linked (GlcNAc...) asparagine glycan is linked to Asn-67. Asp-293 is a catalytic residue. N-linked (GlcNAc...) asparagine glycans are attached at residues Asn-305, Asn-345, Asn-423, Asn-462, and Asn-463.

It belongs to the glycosyl hydrolase 3 family.

It is found in the secreted. The catalysed reaction is Hydrolysis of (1-&gt;4)-beta-D-xylans, to remove successive D-xylose residues from the non-reducing termini.. The protein operates within glycan degradation; xylan degradation. In terms of biological role, xylan 1,4-beta-xylosidase involved in the hydrolysis of xylan, a major structural heterogeneous polysaccharide found in plant biomass representing the second most abundant polysaccharide in the biosphere, after cellulose. This Aspergillus clavatus (strain ATCC 1007 / CBS 513.65 / DSM 816 / NCTC 3887 / NRRL 1 / QM 1276 / 107) protein is Probable exo-1,4-beta-xylosidase bxlB (bxlB).